A 208-amino-acid polypeptide reads, in one-letter code: Thymidylate kinase (208 aa).

10–17 (GPEGSGKS) is a binding site for ATP.

Belongs to the thymidylate kinase family.

It carries out the reaction dTMP + ATP = dTDP + ADP. Its function is as follows. Phosphorylation of dTMP to form dTDP in both de novo and salvage pathways of dTTP synthesis. In Bacillus cytotoxicus (strain DSM 22905 / CIP 110041 / 391-98 / NVH 391-98), this protein is Thymidylate kinase.